A 187-amino-acid polypeptide reads, in one-letter code: 1,6-anhydro-N-acetylmuramyl-L-alanine amidase AmpD (187 aa).

In terms of domain architecture, N-acetylmuramoyl-L-alanine amidase spans L30–P167. Position 34 (H34) interacts with Zn(2+). E116 functions as the Proton acceptor in the catalytic mechanism. Residues H154 and D164 each coordinate Zn(2+).

It belongs to the N-acetylmuramoyl-L-alanine amidase 2 family. Requires Zn(2+) as cofactor.

The protein resides in the cytoplasm. The enzyme catalyses Hydrolyzes the link between N-acetylmuramoyl residues and L-amino acid residues in certain cell-wall glycopeptides.. Amidase activity is inhibited by metal chelators such as EDTA, dipicolinic acid or 1,10-phenanthroline. In terms of biological role, involved in cell wall peptidoglycan recycling. Specifically cleaves the amide bond between the lactyl group of N-acetylmuramic acid and the alpha-amino group of the L-alanine in degradation products containing an anhydro N-acetylmuramyl moiety. Is also involved in beta-lactamase induction. The polypeptide is 1,6-anhydro-N-acetylmuramyl-L-alanine amidase AmpD (Citrobacter freundii).